Reading from the N-terminus, the 86-residue chain is Large ribosomal subunit protein uL23 (86 aa).

This sequence belongs to the universal ribosomal protein uL23 family. In terms of assembly, part of the 50S ribosomal subunit. Contacts protein L29.

Binds to 23S rRNA. One of the proteins that surrounds the polypeptide exit tunnel on the outside of the ribosome. The chain is Large ribosomal subunit protein uL23 from Thermococcus gammatolerans (strain DSM 15229 / JCM 11827 / EJ3).